Reading from the N-terminus, the 303-residue chain is N-acetyl-D-glucosamine kinase (303 aa).

ATP is bound by residues 4–11 (GFDIGGTK) and 133–140 (GVGGGLVL). Residues H157, C177, C179, and C184 each coordinate Zn(2+).

The protein belongs to the ROK (NagC/XylR) family. NagK subfamily.

The enzyme catalyses N-acetyl-D-glucosamine + ATP = N-acetyl-D-glucosamine 6-phosphate + ADP + H(+). Its pathway is cell wall biogenesis; peptidoglycan recycling. In terms of biological role, catalyzes the phosphorylation of N-acetyl-D-glucosamine (GlcNAc) derived from cell-wall degradation, yielding GlcNAc-6-P. The polypeptide is N-acetyl-D-glucosamine kinase (Salmonella gallinarum (strain 287/91 / NCTC 13346)).